Reading from the N-terminus, the 466-residue chain is ATP synthase subunit beta (466 aa).

Residue 155–162 (GGAGVGKT) participates in ATP binding.

The protein belongs to the ATPase alpha/beta chains family. In terms of assembly, F-type ATPases have 2 components, CF(1) - the catalytic core - and CF(0) - the membrane proton channel. CF(1) has five subunits: alpha(3), beta(3), gamma(1), delta(1), epsilon(1). CF(0) has three main subunits: a(1), b(2) and c(9-12). The alpha and beta chains form an alternating ring which encloses part of the gamma chain. CF(1) is attached to CF(0) by a central stalk formed by the gamma and epsilon chains, while a peripheral stalk is formed by the delta and b chains.

It is found in the cell inner membrane. It catalyses the reaction ATP + H2O + 4 H(+)(in) = ADP + phosphate + 5 H(+)(out). Produces ATP from ADP in the presence of a proton gradient across the membrane. The catalytic sites are hosted primarily by the beta subunits. The protein is ATP synthase subunit beta of Aromatoleum aromaticum (strain DSM 19018 / LMG 30748 / EbN1) (Azoarcus sp. (strain EbN1)).